Here is a 962-residue protein sequence, read N- to C-terminus: UPF0182 protein SACE_1102 (962 aa).

7 consecutive transmembrane segments (helical) span residues 10–30, 55–75, 106–126, 168–188, 203–223, 250–270, and 279–299; these read ILLI…RLLG, LGLG…NLWI, LFGW…AQSD, FVAI…FGGI, IQLS…YFLD, VKLI…AAIF, and IATV…PALL. 2 disordered regions span residues 707–730 and 876–916; these read RTFW…GNQQ and FGPG…EMTK. The span at 899–910 shows a compositional bias: pro residues; the sequence is GQQPPTQQPPAG.

The protein belongs to the UPF0182 family.

The protein localises to the cell membrane. In Saccharopolyspora erythraea (strain ATCC 11635 / DSM 40517 / JCM 4748 / NBRC 13426 / NCIMB 8594 / NRRL 2338), this protein is UPF0182 protein SACE_1102.